Here is a 360-residue protein sequence, read N- to C-terminus: uncharacterized protein (360 aa).

A disordered region spans residues 193–245 (SRHTRPKGQPLSSPKKNSGSAARPSTAIGLCRRSQTPGALQSTGPSNTELEPE). Composition is skewed to polar residues over residues 202–212 (PLSSPKKNSGS) and 225–241 (RSQT…SNTE).

This is an uncharacterized protein from Homo sapiens (Human).